A 304-amino-acid chain; its full sequence is UDP-3-O-acyl-N-acetylglucosamine deacetylase (304 aa).

His78, His237, and Asp241 together coordinate Zn(2+). Residue His264 is the Proton donor of the active site.

The protein belongs to the LpxC family. Zn(2+) serves as cofactor.

It catalyses the reaction a UDP-3-O-[(3R)-3-hydroxyacyl]-N-acetyl-alpha-D-glucosamine + H2O = a UDP-3-O-[(3R)-3-hydroxyacyl]-alpha-D-glucosamine + acetate. Its pathway is glycolipid biosynthesis; lipid IV(A) biosynthesis; lipid IV(A) from (3R)-3-hydroxytetradecanoyl-[acyl-carrier-protein] and UDP-N-acetyl-alpha-D-glucosamine: step 2/6. Its function is as follows. Catalyzes the hydrolysis of UDP-3-O-myristoyl-N-acetylglucosamine to form UDP-3-O-myristoylglucosamine and acetate, the committed step in lipid A biosynthesis. In Xylella fastidiosa (strain Temecula1 / ATCC 700964), this protein is UDP-3-O-acyl-N-acetylglucosamine deacetylase.